The chain runs to 1188 residues: DNA polymerase (1188 aa).

Residues 1–74 form a disordered region; that stretch reads MALVPSPRAG…PAANNVSLTP (74 aa). Residues 31 to 41 show a composition bias toward low complexity; that stretch reads STAGAAPTATR.

Belongs to the DNA polymerase type-B family. In terms of assembly, heterodimer with the terminal protein; this heterodimer binds to bp 9 to 18 of the genome. Forms a complex with viral pTP, DBP and hosts NFIA and POU2F1/OCT1 for initiation of replication.

Its subcellular location is the host nucleus. It carries out the reaction DNA(n) + a 2'-deoxyribonucleoside 5'-triphosphate = DNA(n+1) + diphosphate. In terms of biological role, eukaryotic-type DNA polymerase involved in viral genomic replication. DNA synthesis is protein primed, and acts in a strand displacement replication. Assembles in complex with viral pTP, DBP, host NFIA and host POU2F1/OCT1 on viral origin of replication. The polymerase covalently transfers dCMP onto pTP, thereby initiating complementary strand synthesis. This is DNA polymerase from Human adenovirus F serotype 40 (HAdV-40).